We begin with the raw amino-acid sequence, 119 residues long: Ribonuclease P protein component (119 aa).

It belongs to the RnpA family. In terms of assembly, consists of a catalytic RNA component (M1 or rnpB) and a protein subunit.

The catalysed reaction is Endonucleolytic cleavage of RNA, removing 5'-extranucleotides from tRNA precursor.. Functionally, RNaseP catalyzes the removal of the 5'-leader sequence from pre-tRNA to produce the mature 5'-terminus. It can also cleave other RNA substrates such as 4.5S RNA. The protein component plays an auxiliary but essential role in vivo by binding to the 5'-leader sequence and broadening the substrate specificity of the ribozyme. The chain is Ribonuclease P protein component from Histophilus somni (strain 129Pt) (Haemophilus somnus).